A 951-amino-acid polypeptide reads, in one-letter code: MSILPLPALPVLLTEQSQRALSRLREAAPDEPITDSDSAVLALSDFVSDALALHPDWWQGIHQQPPQPEEWQHYADWLSNALVDVNDENALMAALRRFRRHMLARIAWSQALQTSTTEHSLRQLSELAEVIIVAARSWLYQVCCHEWGTPCNAKGVAQPLLILGMGKLGGGELNFSSDIDLIFVYPENGHTQGGRRELDNAQFFTRLGQRLIKVLDQPTVDGFVYRVDMRLRPFGDSGPLVLSFAAMEDYYQEQGRDWERYAMVKARLMGGMDDAYSQELRSTLKPFVFRRYIDFSVIQSLRNMKGMIAREVRRRDLRNNIKLGAGGIREIEFITQVFQLIRGGREPGLQGRSLLPTLQHVGALGLLTPQQVLDLSTSYLFLRRLENLLQAIADEQTQTLPSDELNQQRLAWGMGFDSWDTLQSMLSQHMQAVRHVFDELIGDDAPDNNDIPEHSSYSSLWQDTLDDGDLAPLTPHLTETVREKLMRTIVEFRNDVAKRTIGPRGRDVLDQLMPCLLAEVCARQEADTVLSRLTPLLLGIVTRTTYLELLLESRAALAQLIRLCAASPMVASQLARYPLLLDELLDASTLYQPTAPGAYADELRQYLMRVPEDDEEQQLEAVRQFKQSQQLRIAAGDIGGVLPVMKVSDHLTYLAEAIIAAVVQQAWGLMVERYGQPSHLQHREGRGFAVIAYGKLGGWELGYSSDLDLVFLLDCPSDVMTDGERSIDGRQFYLRLAQRVMHLFSTRTSSGILYEVDARLRPSGAAGMLVSTVEAFDDYQRNEAWTWEHQALVRARMVYGESGVQQTFESIRRSILCAERDADTLRTEVREMREKMRQHLANKDKSRFDIKTDAGGITDIEFITQYLVLRYAAQEPRLTHWSDNVRILELMAQYGVMEESEANALKLAYVTMRNELHHLALQELSGRVSKDRFVAEREQVLVSWNKWLMGA.

Positions methionine 1–alanine 445 are adenylyl removase. The segment at histidine 454–alanine 951 is adenylyl transferase.

It belongs to the GlnE family. Requires Mg(2+) as cofactor.

It catalyses the reaction [glutamine synthetase]-O(4)-(5'-adenylyl)-L-tyrosine + phosphate = [glutamine synthetase]-L-tyrosine + ADP. The enzyme catalyses [glutamine synthetase]-L-tyrosine + ATP = [glutamine synthetase]-O(4)-(5'-adenylyl)-L-tyrosine + diphosphate. Involved in the regulation of glutamine synthetase GlnA, a key enzyme in the process to assimilate ammonia. When cellular nitrogen levels are high, the C-terminal adenylyl transferase (AT) inactivates GlnA by covalent transfer of an adenylyl group from ATP to specific tyrosine residue of GlnA, thus reducing its activity. Conversely, when nitrogen levels are low, the N-terminal adenylyl removase (AR) activates GlnA by removing the adenylyl group by phosphorolysis, increasing its activity. The regulatory region of GlnE binds the signal transduction protein PII (GlnB) which indicates the nitrogen status of the cell. In Pectobacterium atrosepticum (strain SCRI 1043 / ATCC BAA-672) (Erwinia carotovora subsp. atroseptica), this protein is Bifunctional glutamine synthetase adenylyltransferase/adenylyl-removing enzyme.